A 162-amino-acid chain; its full sequence is UPF0254 protein MTH1148 homolog (162 aa).

The protein belongs to the UPF0254 family.

The sequence is that of UPF0254 protein MTH1148 homolog from Methanothermobacter thermautotrophicus (strain Winter) (Methanobacterium thermoautotrophicum).